The chain runs to 65 residues: Large ribosomal subunit protein bL35 (65 aa).

Belongs to the bacterial ribosomal protein bL35 family.

The sequence is that of Large ribosomal subunit protein bL35 from Baumannia cicadellinicola subsp. Homalodisca coagulata.